Reading from the N-terminus, the 200-residue chain is Lipopolysaccharide core heptose(II)-phosphate phosphatase (200 aa).

The N-terminal stretch at 1–25 is a signal peptide; that stretch reads MLAFCRSSLKSKKYFIILLALAAIA.

The protein belongs to the phosphoglycerate mutase family. Ais subfamily.

Its subcellular location is the periplasm. It participates in bacterial outer membrane biogenesis; lipopolysaccharide metabolism. Its function is as follows. Catalyzes the dephosphorylation of heptose(II) of the outer membrane lipopolysaccharide core. The polypeptide is Lipopolysaccharide core heptose(II)-phosphate phosphatase (Escherichia coli (strain SE11)).